The following is a 101-amino-acid chain: MASGSMSSYGSGSWTVKQNKAFERALAVYDQDTPDRWHNVARAVGGKTPEEAKRQYDLLVRDIESIENGHVPFPDYKTTTGNSNRGRLRDEEKRMRSMKLQ.

The region spanning Tyr-9–Glu-64 is the SANT domain. A disordered region spans residues Gly-69–Gln-101.

In terms of tissue distribution, expressed in the funiculus of ovules and in embryos. In young ovules, expression is observed in the adaxial side of the funiculus (the stalk connecting the embryo sac to the placenta). Also expressed in heart-stage embryos, in the cortex and endodermis of the hypocotyl region but not in the cotyledons, shoot and root apical meristems, provasculature or epidermis. Not detected in young seedlings, mature roots or in young floral primordia.

Its subcellular location is the nucleus. Functionally, probable transcription factor. Required for female gametophyte development. This is Protein RADIALIS-like 2 (RL2) from Arabidopsis thaliana (Mouse-ear cress).